Here is a 707-residue protein sequence, read N- to C-terminus: Polyribonucleotide nucleotidyltransferase (707 aa).

Positions 488 and 494 each coordinate Mg(2+). The 60-residue stretch at 554 to 613 folds into the KH domain; that stretch reads PRLFTMKINQDKIREVIGKGGETIRSITAETGTEINIAEDGTITIAATTQEAGDAAKKRI. The S1 motif domain maps to 623–693; sequence GKVYEGTVVK…DRGRVRLSIK (71 aa).

The protein belongs to the polyribonucleotide nucleotidyltransferase family. Mg(2+) serves as cofactor.

It is found in the cytoplasm. The catalysed reaction is RNA(n+1) + phosphate = RNA(n) + a ribonucleoside 5'-diphosphate. Involved in mRNA degradation. Catalyzes the phosphorolysis of single-stranded polyribonucleotides processively in the 3'- to 5'-direction. The chain is Polyribonucleotide nucleotidyltransferase from Neisseria meningitidis serogroup B (strain ATCC BAA-335 / MC58).